Here is a 327-residue protein sequence, read N- to C-terminus: Deoxyribonuclease (327 aa).

The or 35 signal peptide spans 1 to 24; it reads MSKKLRNFLVRIIVAAFASFAVMA. A disordered region spans residues 299 to 327; sequence DSTTDEIENSVDDSEEIVYNDTTTEEEEN.

The enzyme catalyses Endonucleolytic cleavage to 5'-phosphodinucleotide and 5'-phosphooligonucleotide end-products.. May have a role in S.equisimilis virulence. This is Deoxyribonuclease (sdc) from Streptococcus dysgalactiae subsp. equisimilis (Streptococcus equisimilis).